Consider the following 1303-residue polypeptide: Endoplasmic reticulum transmembrane helix translocase spfA (1303 aa).

Helical transmembrane passes span 25–45 (LHAY…VYLS) and 57–77 (EWTF…WLMT). The segment at 158-191 (KPPVKVFQQAQGLTSKEEIDRIQHHYGDNTFDIP) is A-domain; part 1. Transmembrane regions (helical) follow at residues 201 to 221 (EHAV…WMLD) and 223 to 243 (YWYY…TVVW). The interval 256–408 (NIKPYDVWVY…LVRTMIYSTE (153 aa)) is A-domain; part 2. A glycan (N-linked (GlcNAc...) asparagine) is linked at Asn-287. The chain crosses the membrane as a helical span at residues 415 to 435 (VEALLFILFLLIFAIAAAWYV). Asn-474 carries N-linked (GlcNAc...) asparagine glycosylation. Positions 484–513 (AIFCTEPFRIPFAGRVDVACFDKTGTLTGE) are P-domain; part 1. The 4-aspartylphosphate intermediate role is filled by Asp-505. Residues Asp-505 and Thr-507 each contribute to the Mg(2+) site. Residue 505–507 (DKT) participates in ATP binding. The segment at 515-721 (LVVDGIAGLT…FAGFLVLQCP (207 aa)) is N-domain. Asn-589 is a glycosylation site (N-linked (GlcNAc...) asparagine). ATP is bound by residues Phe-616 and Arg-678. Residues 724-883 (EDAIKAVRML…HVGVALLNGS (160 aa)) are P-domain; part 2. An N-linked (GlcNAc...) asparagine glycan is attached at Asn-734. ATP contacts are provided by residues Asp-746 and 862–866 (DGTND). Asp-862 lines the Mg(2+) pocket. The arm-like stretch occupies residues 884-1019 (PEDLAKIAEH…ELDDSEPPTI (136 aa)). Asn-958 carries N-linked (GlcNAc...) asparagine glycosylation. The interval 1020–1035 (KLGDASVAAPFTSKLA) is P-domain; part 3. Transmembrane regions (helical) follow at residues 1060–1080 (ILAL…LDGI), 1082–1102 (FGDG…LSIS), 1122–1142 (VYII…LIYL), 1201–1221 (AMYW…TEFI), and 1239–1259 (VTLT…ENVL). A disordered region spans residues 1277-1303 (DQLQREMERKKQEELETQAEKERQRKV).

This sequence belongs to the cation transport ATPase (P-type) (TC 3.A.3) family. Type V subfamily. It depends on Mg(2+) as a cofactor.

The protein localises to the endoplasmic reticulum membrane. It catalyses the reaction [protein]-with a C-terminal TM segment(out) + ATP + H2O = [protein]-with a C-terminal TM segment(in) + ADP + phosphate + H(+). Its activity is regulated as follows. The ATPase activity is stimulated by phosphatidylinositol 4-phosphate (PI4P). Its function is as follows. Endoplasmic reticulum (ER) translocase required to remove mitochondrial transmembrane proteins mistargeted to the endoplasmic reticulum. Acts as a dislocase that mediates the ATP-dependent extraction of mislocalized mitochondrial transmembrane proteins from the endoplasmic reticulum membrane. Works in concert with the ER Ca(2+) pump srcA to support ER homeostasis. With srcA, also supports redox homeostasis and virulence. In Aspergillus fumigatus (strain ATCC MYA-4609 / CBS 101355 / FGSC A1100 / Af293) (Neosartorya fumigata), this protein is Endoplasmic reticulum transmembrane helix translocase spfA.